A 584-amino-acid polypeptide reads, in one-letter code: Long-chain-fatty-acid--AMP ligase FadD26 (584 aa).

It belongs to the ATP-dependent AMP-binding enzyme family.

It carries out the reaction holo-[(phenol)carboxyphthiodiolenone synthase] + a long-chain fatty acid + ATP = a long-chain fatty acyl-[(phenol)carboxyphthiodiolenone synthase] + AMP + diphosphate. The enzyme catalyses eicosanoate + holo-[(phenol)carboxyphthiodiolenone synthase] + ATP = icosanoyl-[(phenol)carboxyphthiodiolenone synthase] + AMP + diphosphate. The catalysed reaction is holo-[(phenol)carboxyphthiodiolenone synthase] + docosanoate + ATP = docosanoyl-[(phenol)carboxyphthiodiolenone synthase] + AMP + diphosphate. Its pathway is lipid metabolism; fatty acid biosynthesis. Functionally, catalyzes the activation of long-chain fatty acids as acyl-adenylates (acyl-AMP), which are then transferred to the multifunctional polyketide synthase PpsA for further chain extension. Catalyzes the adenylation of the long-chain fatty acids eicosanoate (C20) or docosanoate (C22), and potentially the very-long-chain fatty acid lignocerate (C24). Involved in the biosynthesis of phthiocerol dimycocerosate (DIM A) and phthiodiolone dimycocerosate (DIM B). The sequence is that of Long-chain-fatty-acid--AMP ligase FadD26 from Mycobacterium marinum (strain ATCC BAA-535 / M).